A 200-amino-acid chain; its full sequence is NADH-quinone oxidoreductase subunit C (200 aa).

It belongs to the complex I 30 kDa subunit family. NDH-1 is composed of 14 different subunits. Subunits NuoB, C, D, E, F, and G constitute the peripheral sector of the complex.

The protein resides in the cell inner membrane. It catalyses the reaction a quinone + NADH + 5 H(+)(in) = a quinol + NAD(+) + 4 H(+)(out). Its function is as follows. NDH-1 shuttles electrons from NADH, via FMN and iron-sulfur (Fe-S) centers, to quinones in the respiratory chain. The immediate electron acceptor for the enzyme in this species is believed to be ubiquinone. Couples the redox reaction to proton translocation (for every two electrons transferred, four hydrogen ions are translocated across the cytoplasmic membrane), and thus conserves the redox energy in a proton gradient. In Rhizobium leguminosarum bv. trifolii (strain WSM2304), this protein is NADH-quinone oxidoreductase subunit C.